A 783-amino-acid chain; its full sequence is Zinc finger protein 107 (783 aa).

The segment at 76 to 98 adopts a C2H2-type 1; atypical zinc-finger fold; the sequence is FQCNKYVKVFDKFSNSNRYKRRH. 3 consecutive C2H2-type zinc fingers follow at residues 104–126, 132–154, and 160–182; these read FKCKECSKSFCVLSQLTQHRRIH, YKCEECGKAFNWFSTLTKHKRIH, and YKCEECGKAFNQSSQLTRHKIIH. Lys-186 is covalently cross-linked (Glycyl lysine isopeptide (Lys-Gly) (interchain with G-Cter in SUMO2)). A C2H2-type 5 zinc finger spans residues 188 to 210; it reads NKCEECGKAFKQASHLTIHKIIH. The C2H2-type 6; atypical zinc finger occupies 216-238; it reads YKYEECGKVFSQSSHLTTQKILH. A C2H2-type 7 zinc finger spans residues 244–266; the sequence is YKCKECGKAFNLFSNLTNHKRIH. The C2H2-type 8; atypical zinc finger occupies 272–294; it reads YKCKECGRAFNISSNLNKQEKIH. The C2H2-type 9; atypical zinc finger occupies 300 to 322; the sequence is NKCEECDKAFNRSLKLTAHKKIL. 2 consecutive C2H2-type zinc fingers follow at residues 328-350 and 356-378; these read YKCEECGKVFNQFSTLTRHKIIH and YKCKECGKAFNQSSNLTEHKKIH. The C2H2-type 12; atypical zinc-finger motif lies at 384-406; it reads YKCEECGKAFNQHSNLINHRKIY. 4 C2H2-type zinc fingers span residues 412 to 434, 440 to 462, 468 to 490, and 496 to 518; these read YKCEECGKAFNRSSTLTRHKKIH, YKCEECDRAFSQSSNLTEHKKIH, YKCEECGKAFNRFSTLTKHKRIH, and YKCEECGKAFNQSYQLTRHKIVH. A C2H2-type 17; atypical zinc finger spans residues 524–546; sequence NKCEEFGKAFKQSSHRTIHKIIH. The C2H2-type 18; atypical zinc finger occupies 552–574; the sequence is YKCEEHGKVFNQSSNLTTQKIIH. The C2H2-type 19; atypical zinc-finger motif lies at 580-602; that stretch reads YKFEEHGKAFNLFSNITNHKIIY. 5 C2H2-type zinc fingers span residues 608–630, 636–658, 664–686, 692–714, and 720–742; these read HKCEECGKAYNRFSNLTIHKRIH, YQCAECGKAFNCSSTLNRHKIIH, YKCKECGKAFNLSSTLTAHKKIH, YKCEECGKAFNQSSNLTTHKKIH, and YKCEECGKSFNQFSSLNIHKIIH. A C2H2-type 25; atypical zinc finger spans residues 748-770; it reads YKCGDYGRAFNLSSNLTTHKKIH.

It belongs to the krueppel C2H2-type zinc-finger protein family. Expressed in brain, heart, skeletal muscle, kidney and pancreas. Weakly expressed in aorta, liver and lung.

The protein resides in the nucleus. In terms of biological role, may be involved in transcriptional regulation. The chain is Zinc finger protein 107 (ZNF107) from Homo sapiens (Human).